The chain runs to 234 residues: 2,3,4,5-tetrahydropyridine-2,6-dicarboxylate N-acetyltransferase (234 aa).

This sequence belongs to the transferase hexapeptide repeat family. DapH subfamily.

The enzyme catalyses (S)-2,3,4,5-tetrahydrodipicolinate + acetyl-CoA + H2O = L-2-acetamido-6-oxoheptanedioate + CoA. The protein operates within amino-acid biosynthesis; L-lysine biosynthesis via DAP pathway; LL-2,6-diaminopimelate from (S)-tetrahydrodipicolinate (acetylase route): step 1/3. In terms of biological role, catalyzes the transfer of an acetyl group from acetyl-CoA to tetrahydrodipicolinate. The chain is 2,3,4,5-tetrahydropyridine-2,6-dicarboxylate N-acetyltransferase from Leuconostoc citreum (strain KM20).